Here is a 305-residue protein sequence, read N- to C-terminus: UDP-N-acetylenolpyruvoylglucosamine reductase 2 (305 aa).

The FAD-binding PCMH-type domain occupies Val33–Gly197. The active site involves Arg176. The active-site Proton donor is Ser226. Glu296 is an active-site residue.

This sequence belongs to the MurB family. Requires FAD as cofactor.

The protein resides in the cytoplasm. The catalysed reaction is UDP-N-acetyl-alpha-D-muramate + NADP(+) = UDP-N-acetyl-3-O-(1-carboxyvinyl)-alpha-D-glucosamine + NADPH + H(+). The protein operates within cell wall biogenesis; peptidoglycan biosynthesis. Cell wall formation. This chain is UDP-N-acetylenolpyruvoylglucosamine reductase 2 (murB2), found in Bacillus cereus (strain ATCC 14579 / DSM 31 / CCUG 7414 / JCM 2152 / NBRC 15305 / NCIMB 9373 / NCTC 2599 / NRRL B-3711).